A 236-amino-acid polypeptide reads, in one-letter code: Small ribosomal subunit protein eS6 (236 aa).

Residues S232 and S233 each carry the phosphoserine modification.

The protein belongs to the eukaryotic ribosomal protein eS6 family. Phosphorylated.

In Kluyveromyces lactis (strain ATCC 8585 / CBS 2359 / DSM 70799 / NBRC 1267 / NRRL Y-1140 / WM37) (Yeast), this protein is Small ribosomal subunit protein eS6 (RPS6).